We begin with the raw amino-acid sequence, 131 residues long: Small ribosomal subunit protein eS24 (131 aa).

An N-acetylmethionine modification is found at methionine 1. At threonine 9 the chain carries Phosphothreonine. A Glycyl lysine isopeptide (Lys-Gly) (interchain with G-Cter in SUMO2) cross-link involves residue lysine 37. The segment covering 90-100 (RLARHGLYEKK) has biased composition (basic and acidic residues). The interval 90-131 (RLARHGLYEKKKTSRKQRKERKNRMKKVRGTAKANVGAGKKK) is disordered. The segment covering 101-119 (KTSRKQRKERKNRMKKVRG) has biased composition (basic residues).

The protein belongs to the eukaryotic ribosomal protein eS24 family. Component of the small ribosomal subunit. Part of the small subunit (SSU) processome, composed of more than 70 proteins and the RNA chaperone small nucleolar RNA (snoRNA) U3.

Its subcellular location is the cytoplasm. It localises to the nucleus. It is found in the nucleolus. In terms of biological role, component of the small ribosomal subunit. The ribosome is a large ribonucleoprotein complex responsible for the synthesis of proteins in the cell. Required for processing of pre-rRNA and maturation of 40S ribosomal subunits. Part of the small subunit (SSU) processome, first precursor of the small eukaryotic ribosomal subunit. During the assembly of the SSU processome in the nucleolus, many ribosome biogenesis factors, an RNA chaperone and ribosomal proteins associate with the nascent pre-rRNA and work in concert to generate RNA folding, modifications, rearrangements and cleavage as well as targeted degradation of pre-ribosomal RNA by the RNA exosome. In Pongo abelii (Sumatran orangutan), this protein is Small ribosomal subunit protein eS24 (RPS24).